A 202-amino-acid chain; its full sequence is Complement component C8 gamma chain (202 aa).

An N-terminal signal peptide occupies residues 1 to 20 (MLPPGTATLLTLLLAAGSLG). Gln21 is modified (pyrrolidone carboxylic acid). Cys96 and Cys188 are oxidised to a cystine.

This sequence belongs to the calycin superfamily. Lipocalin family. Heterotrimer of 3 chains: alpha (C8A), beta (C8B) and gamma (C8G); the alpha and gamma chains are disulfide bonded. Component of the membrane attack complex (MAC), composed of complement C5b, C6, C7, C8A, C8B, C8G and multiple copies of the pore-forming subunit C9.

It is found in the secreted. Its subcellular location is the target cell membrane. With respect to regulation, membrane attack complex (MAC) assembly is inhibited by CD59, thereby protecting self-cells from damage during complement activation. MAC assembly is also inhibited by clusterin (CLU) chaperones that inhibit polymerization of C9. In terms of biological role, component of the membrane attack complex (MAC), a multiprotein complex activated by the complement cascade, which inserts into a target cell membrane and forms a pore, leading to target cell membrane rupture and cell lysis. The MAC is initiated by proteolytic cleavage of C5 into complement C5b in response to the classical, alternative, lectin and GZMK complement pathways. The complement pathways consist in a cascade of proteins that leads to phagocytosis and breakdown of pathogens and signaling that strengthens the adaptive immune system. C8G, together with C8A and C8B, inserts into the target membrane, but does not form pores by itself. During MAC assembly, associates with C5b, C6 and C7 to form the C5b8 intermediate complex that inserts into the target membrane and traverses the bilayer increasing membrane rigidity. The polypeptide is Complement component C8 gamma chain (Homo sapiens (Human)).